A 3598-amino-acid polypeptide reads, in one-letter code: Dystrophin, isoforms A/C/F/G/H (3598 aa).

The actin-binding stretch occupies residues 1–230 (MEPGILIDER…YVMCLYHAME (230 aa)). Calponin-homology (CH) domains lie at 12 to 116 (HIQK…LEFN) and 127 to 230 (NGVE…HAME). The tract at residues 233-297 (RTRQQEQEQD…SGELKTHSMR (65 aa)) is disordered. Over residues 267–286 (NDQTSLGLYTSDSAGSMEQR) the composition is skewed to polar residues. Spectrin repeat units lie at residues 307-420 (VEIS…KILM), 423-525 (AEFQ…KLQQ), 851-963 (QDFG…AIEN), 1056-1170 (SHID…LLEH), 1173-1275 (TQLG…LLEQ), and 1381-1483 (SYES…TLER). Disordered regions lie at residues 1633–1696 (ARNT…VMPD), 1716–1742 (SLNP…SSPA), 1799–1854 (EDSD…ENTS), 1878–1941 (RDIL…EPLV), and 2204–2233 (GPRI…NEPS). A compositionally biased stretch (low complexity) spans 1663-1679 (SGESPSSAHTSSSESPT). Residues 1803–1816 (SSVRVDSQGKEMRR) are compositionally biased toward basic and acidic residues. 2 positions are modified to phosphoserine: Ser1832 and Ser1838. Residues 1834–1843 (NDEDSAEQEE) show a composition bias toward acidic residues. The segment covering 1878–1893 (RDILRDSEEEEPKTPD) has biased composition (basic and acidic residues). Residues 2218–2233 (SAATMSCRSEYNNEPS) are compositionally biased toward polar residues. Spectrin repeat units follow at residues 2237–2363 (ALAG…QLKN), 2366–2472 (SDSQ…QLHA), 2475–2576 (HSLQ…RLES), 2579–2712 (EHWN…RLDE), and 2715–2819 (TKMR…VLCQ). Positions 2655-2679 (VSDTSDTEANHDSDSRYMSAEEQSR) are disordered. A disordered region spans residues 2822 to 2852 (AQQTHENGDDGRTTSNSGTIGPLPNLGQSVK). The region spanning 2849-2882 (QSVKPPWERATTAANVPYYIDHERETTHWDHPEM) is the WW domain. Residues 3107–3163 (KHQAKCNICKEYPIVGFRYRCLKCFNFDMCQKCFFFGRNAKNHKLTHPMHEYCTTTT) form a ZZ-type zinc finger. Positions 3112, 3115, 3127, 3130, 3136, 3139, 3149, and 3153 each coordinate Zn(2+). Ser3207 is modified (phosphoserine). Disordered stretches follow at residues 3316–3344 (EQSG…GEQG), 3387–3449 (DEPN…KGIM), 3483–3545 (LHQQ…QQHL), and 3560–3598 (ELES…ELQK). Polar residues-rich tracts occupy residues 3325–3337 (NGMQ…MTGL) and 3408–3439 (ALNS…QQNG). Low complexity predominate over residues 3485-3499 (QQQQQQLQQQPPQQQ). Residues 3505–3523 (GNGGMDISGGMQTSGGYLG) show a composition bias toward gly residues. Low complexity predominate over residues 3534-3545 (SSLMQQQHQQHL). Acidic residues predominate over residues 3560-3570 (ELESINDDLED). Positions 3571-3589 (SSSSNTTNTTTTTTTTATT) are enriched in low complexity.

As to quaternary structure, component of the dystrophin associated protein complex (DAPC). Interacts with Dg, via the Dg WW domain binding sites. In terms of tissue distribution, isoform A, isoform F and isoform G are expressed in the midgut endoderm of stage 12 embryos. In stage 16 embryos, expression is also seen in the pericardial cells, cells at the ectoderm segmental border and cells along the midline of the CNS. During embryogenesis, isoform A is also expressed in the visceral mesoderm, muscle attachment sites, mesectodermal cells at the midline, the gut, and throughout muscle fibers. In larvae, isoform A is found in all muscle fibers, but not detectable in the brain or neuropil.

It localises to the cell membrane. The protein resides in the sarcolemma. Its subcellular location is the cytoplasm. It is found in the cytoskeleton. Its function is as follows. Required for the maintenance of appropriate synaptic retrograde communication and the stabilization of muscle cell architecture or physiology. Both det and Dg are required for maintenance of early dpp signaling in the presumptive crossvein. Isoform A is not required to maintain muscle integrity, but plays a role in neuromuscular homeostasis by regulating neurotransmitter release. May play a role in anchoring the cytoskeleton to the plasma membrane. The sequence is that of Dystrophin, isoforms A/C/F/G/H (Dys) from Drosophila melanogaster (Fruit fly).